Consider the following 193-residue polypeptide: ATP-dependent Clp protease proteolytic subunit (193 aa).

S98 functions as the Nucleophile in the catalytic mechanism. H123 is a catalytic residue.

Belongs to the peptidase S14 family. As to quaternary structure, fourteen ClpP subunits assemble into 2 heptameric rings which stack back to back to give a disk-like structure with a central cavity, resembling the structure of eukaryotic proteasomes.

It localises to the cytoplasm. The catalysed reaction is Hydrolysis of proteins to small peptides in the presence of ATP and magnesium. alpha-casein is the usual test substrate. In the absence of ATP, only oligopeptides shorter than five residues are hydrolyzed (such as succinyl-Leu-Tyr-|-NHMec, and Leu-Tyr-Leu-|-Tyr-Trp, in which cleavage of the -Tyr-|-Leu- and -Tyr-|-Trp bonds also occurs).. In terms of biological role, cleaves peptides in various proteins in a process that requires ATP hydrolysis. Has a chymotrypsin-like activity. Plays a major role in the degradation of misfolded proteins. The chain is ATP-dependent Clp protease proteolytic subunit from Agathobacter rectalis (strain ATCC 33656 / DSM 3377 / JCM 17463 / KCTC 5835 / VPI 0990) (Eubacterium rectale).